The following is a 65-amino-acid chain: Hirudin-2' (65 aa).

The interval 1–3 (ITY) is interaction with thrombin active site. Disulfide bonds link Cys6-Cys14, Cys16-Cys28, and Cys22-Cys39. Residues 39 to 65 (CVTGEGTPKPQSHNDGDFEEIPEEYLQ) are disordered. Thr45 is a glycosylation site (O-linked (GalNAc...) threonine). The tract at residues 55–65 (DFEEIPEEYLQ) is interaction with fibrinogen-binding exosite of thrombin. A compositionally biased stretch (acidic residues) spans 55–65 (DFEEIPEEYLQ). The residue at position 63 (Tyr63) is a Sulfotyrosine.

This sequence belongs to the protease inhibitor I14 (hirudin) family.

It localises to the secreted. In terms of biological role, hirudin is a potent thrombin-specific protease inhibitor. It forms a stable non-covalent complex with alpha-thrombin, thereby abolishing its ability to cleave fibrinogen. This Hirudo medicinalis (Medicinal leech) protein is Hirudin-2'.